Reading from the N-terminus, the 397-residue chain is MFHRIEEALEDLKKGKVVIVCDDENRENEGDFIALAEYITPETINFMITHGRGLVCVPITEGYAERLQLEPMVSHNTDSHHTAFTVSIDHVSTTTGISAHERATTIQELLNPASKGADFNRPGHIFPLIAKEGGVLRRAGHTEAAVDLAKLCGAEPAGVICEIINEDGTMARVPDLIECAKQFDIKMITIEDLIAYRRHHETLVTREAEITLPTDFGTFHAIGYSNSLDTKEHIALVKGDISTGEPVLVRVHSECLTGDVFGSHRCDCGPQLHAALAQIEREGKGVLLYMRQEGRGIGLLNKLRAYKLQEEGFDTVEANEKLGFPADLRDYGIGAQILKDLGLQSLRLLTNNPRKIAGLQGYDLEVVERVPLQMPAKEENKSYLQTKVNKLGHLLNL.

The DHBP synthase stretch occupies residues 1–199 (MFHRIEEALE…IEDLIAYRRH (199 aa)). D-ribulose 5-phosphate-binding positions include 26 to 27 (RE), D31, 138 to 142 (RAGHT), and E162. E27 is a binding site for Mg(2+). Residue H141 participates in Mg(2+) binding. The GTP cyclohydrolase II stretch occupies residues 200–397 (HETLVTREAE…VNKLGHLLNL (198 aa)). Residue 250 to 254 (RVHSE) participates in GTP binding. The Zn(2+) site is built by C255, C266, and C268. GTP contacts are provided by residues Q271, 293 to 295 (EGR), and T315. D327 functions as the Proton acceptor; for GTP cyclohydrolase activity in the catalytic mechanism. R329 serves as the catalytic Nucleophile; for GTP cyclohydrolase activity. GTP is bound by residues T350 and K355.

The protein in the N-terminal section; belongs to the DHBP synthase family. This sequence in the C-terminal section; belongs to the GTP cyclohydrolase II family. Mg(2+) is required as a cofactor. The cofactor is Mn(2+). Requires Zn(2+) as cofactor.

It carries out the reaction D-ribulose 5-phosphate = (2S)-2-hydroxy-3-oxobutyl phosphate + formate + H(+). The enzyme catalyses GTP + 4 H2O = 2,5-diamino-6-hydroxy-4-(5-phosphoribosylamino)-pyrimidine + formate + 2 phosphate + 3 H(+). The protein operates within cofactor biosynthesis; riboflavin biosynthesis; 2-hydroxy-3-oxobutyl phosphate from D-ribulose 5-phosphate: step 1/1. It functions in the pathway cofactor biosynthesis; riboflavin biosynthesis; 5-amino-6-(D-ribitylamino)uracil from GTP: step 1/4. In terms of biological role, catalyzes the conversion of D-ribulose 5-phosphate to formate and 3,4-dihydroxy-2-butanone 4-phosphate. Catalyzes the conversion of GTP to 2,5-diamino-6-ribosylamino-4(3H)-pyrimidinone 5'-phosphate (DARP), formate and pyrophosphate. The sequence is that of Riboflavin biosynthesis protein RibBA from Bacillus cereus (strain ATCC 14579 / DSM 31 / CCUG 7414 / JCM 2152 / NBRC 15305 / NCIMB 9373 / NCTC 2599 / NRRL B-3711).